We begin with the raw amino-acid sequence, 172 residues long: Centrin-1 (172 aa).

The tract at residues M1–K30 is disordered. EF-hand domains are found at residues E28–E63, P64–E99, D101–N136, and L137–Y172. Residues D41, D43, S45, T47, and E52 each coordinate Ca(2+). Positions 150, 152, 154, 156, and 161 each coordinate Ca(2+).

Belongs to the centrin family. Monomer. Interacts with CIMAP3. Interacts with USP49.

The protein localises to the cytoplasm. It is found in the cytoskeleton. It localises to the microtubule organizing center. The protein resides in the centrosome. Plays a fundamental role in microtubule-organizing center structure and function. Plays a role in sperm cilia formation. This Bos taurus (Bovine) protein is Centrin-1 (CETN1).